Here is a 396-residue protein sequence, read N- to C-terminus: S-adenosylmethionine synthase (396 aa).

His14 lines the ATP pocket. A Mg(2+)-binding site is contributed by Asp16. Position 42 (Glu42) interacts with K(+). L-methionine is bound by residues Glu55 and Gln98. Positions Gln98–Lys108 are flexible loop. ATP is bound by residues Asp174–Lys176, Arg240–Phe241, Asp249, Arg255–Lys256, Ala272, and Lys276. An L-methionine-binding site is contributed by Asp249. Lys280 is an L-methionine binding site.

The protein belongs to the AdoMet synthase family. Homotetramer; dimer of dimers. Mg(2+) serves as cofactor. Requires K(+) as cofactor.

It localises to the cytoplasm. It carries out the reaction L-methionine + ATP + H2O = S-adenosyl-L-methionine + phosphate + diphosphate. The protein operates within amino-acid biosynthesis; S-adenosyl-L-methionine biosynthesis; S-adenosyl-L-methionine from L-methionine: step 1/1. Functionally, catalyzes the formation of S-adenosylmethionine (AdoMet) from methionine and ATP. The overall synthetic reaction is composed of two sequential steps, AdoMet formation and the subsequent tripolyphosphate hydrolysis which occurs prior to release of AdoMet from the enzyme. The chain is S-adenosylmethionine synthase from Caldicellulosiruptor saccharolyticus (strain ATCC 43494 / DSM 8903 / Tp8T 6331).